The chain runs to 467 residues: Cysteine--tRNA ligase (467 aa).

Cysteine 29 is a binding site for Zn(2+). Residues 31–41 carry the 'HIGH' region motif; the sequence is PTVYDDSHLGH. The disordered stretch occupies residues 155-174; sequence KLSGRGEDLEQVSRIESSEE. Basic and acidic residues predominate over residues 158-174; sequence GRGEDLEQVSRIESSEE. Zn(2+) is bound by residues cysteine 210, histidine 239, and glutamate 243. The short motif at 271–275 is the 'KMSKS' region element; that stretch reads KMSKS. Lysine 274 provides a ligand contact to ATP.

It belongs to the class-I aminoacyl-tRNA synthetase family. As to quaternary structure, monomer. Requires Zn(2+) as cofactor.

It localises to the cytoplasm. The enzyme catalyses tRNA(Cys) + L-cysteine + ATP = L-cysteinyl-tRNA(Cys) + AMP + diphosphate. This is Cysteine--tRNA ligase from Wolinella succinogenes (strain ATCC 29543 / DSM 1740 / CCUG 13145 / JCM 31913 / LMG 7466 / NCTC 11488 / FDC 602W) (Vibrio succinogenes).